The sequence spans 46 residues: Protein PsbN (46 aa).

The chain crosses the membrane as a helical span at residues 7 to 27 (ALSVAIGVLAVLLGMTGFGVY).

This sequence belongs to the PsbN family.

The protein resides in the cellular thylakoid membrane. Its function is as follows. May play a role in photosystem I and II biogenesis. This chain is Protein PsbN, found in Parasynechococcus marenigrum (strain WH8102).